We begin with the raw amino-acid sequence, 289 residues long: Metal-staphylopine import system permease protein CntC (289 aa).

5 consecutive transmembrane segments (helical) span residues 13–33 (AVIA…APLV), 77–97 (LLYV…LGFL), 115–135 (VMLA…FGMG), 194–214 (IAII…GFSF), and 249–269 (IAIV…QIAI). Residues 73-262 (IRPSLLYVFV…IIVMAFNFLS (190 aa)) form the ABC transmembrane type-1 domain.

The protein belongs to the binding-protein-dependent transport system permease family. In terms of assembly, the complex is composed of two ATP-binding proteins (CntD and CntF), two transmembrane proteins (CntB and CntC) and a solute-binding protein (CntA).

The protein localises to the cell membrane. With respect to regulation, nickel/cobalt import is reduced in the presence of zinc. Functionally, part of the ABC transporter complex CntABCDF (Opp1) involved in the uptake of metal in complex with the metallophore staphylopine (StP). Involved in the import of divalent metals ions such as nickel, cobalt and zinc. Probably responsible for the translocation of the substrate across the membrane. Plays a major role in nickel/cobalt import in zinc-depleted conditions. Contributes to virulence. Required for full urease activity in vitro. In Staphylococcus aureus (strain NCTC 8325 / PS 47), this protein is Metal-staphylopine import system permease protein CntC.